We begin with the raw amino-acid sequence, 231 residues long: Large ribosomal subunit protein uL1 (231 aa).

This sequence belongs to the universal ribosomal protein uL1 family. As to quaternary structure, part of the 50S ribosomal subunit.

Functionally, binds directly to 23S rRNA. The L1 stalk is quite mobile in the ribosome, and is involved in E site tRNA release. Protein L1 is also a translational repressor protein, it controls the translation of the L11 operon by binding to its mRNA. The polypeptide is Large ribosomal subunit protein uL1 (Caldanaerobacter subterraneus subsp. tengcongensis (strain DSM 15242 / JCM 11007 / NBRC 100824 / MB4) (Thermoanaerobacter tengcongensis)).